The sequence spans 430 residues: Serine--tRNA ligase (430 aa).

237-239 is an L-serine binding site; the sequence is TAE. 268-270 is a binding site for ATP; that stretch reads RSE. L-serine is bound at residue Glu-291. 355-358 is a binding site for ATP; sequence EISS. Ser-391 lines the L-serine pocket.

Belongs to the class-II aminoacyl-tRNA synthetase family. Type-1 seryl-tRNA synthetase subfamily. In terms of assembly, homodimer. The tRNA molecule binds across the dimer.

Its subcellular location is the cytoplasm. The catalysed reaction is tRNA(Ser) + L-serine + ATP = L-seryl-tRNA(Ser) + AMP + diphosphate + H(+). It catalyses the reaction tRNA(Sec) + L-serine + ATP = L-seryl-tRNA(Sec) + AMP + diphosphate + H(+). The protein operates within aminoacyl-tRNA biosynthesis; selenocysteinyl-tRNA(Sec) biosynthesis; L-seryl-tRNA(Sec) from L-serine and tRNA(Sec): step 1/1. Functionally, catalyzes the attachment of serine to tRNA(Ser). Is also able to aminoacylate tRNA(Sec) with serine, to form the misacylated tRNA L-seryl-tRNA(Sec), which will be further converted into selenocysteinyl-tRNA(Sec). The protein is Serine--tRNA ligase of Shigella boydii serotype 18 (strain CDC 3083-94 / BS512).